We begin with the raw amino-acid sequence, 273 residues long: 4-hydroxy-tetrahydrodipicolinate reductase (273 aa).

12–17 (GAAGRM) contributes to the NAD(+) binding site. Arginine 39 lines the NADP(+) pocket. NAD(+)-binding positions include 102-104 (GTT) and 126-129 (AANF). Histidine 159 serves as the catalytic Proton donor/acceptor. Residue histidine 160 coordinates (S)-2,3,4,5-tetrahydrodipicolinate. Lysine 163 serves as the catalytic Proton donor. Residue 169-170 (GT) coordinates (S)-2,3,4,5-tetrahydrodipicolinate.

The protein belongs to the DapB family. Homotetramer.

The protein localises to the cytoplasm. The catalysed reaction is (S)-2,3,4,5-tetrahydrodipicolinate + NAD(+) + H2O = (2S,4S)-4-hydroxy-2,3,4,5-tetrahydrodipicolinate + NADH + H(+). It carries out the reaction (S)-2,3,4,5-tetrahydrodipicolinate + NADP(+) + H2O = (2S,4S)-4-hydroxy-2,3,4,5-tetrahydrodipicolinate + NADPH + H(+). It participates in amino-acid biosynthesis; L-lysine biosynthesis via DAP pathway; (S)-tetrahydrodipicolinate from L-aspartate: step 4/4. Functionally, catalyzes the conversion of 4-hydroxy-tetrahydrodipicolinate (HTPA) to tetrahydrodipicolinate. This is 4-hydroxy-tetrahydrodipicolinate reductase from Erwinia tasmaniensis (strain DSM 17950 / CFBP 7177 / CIP 109463 / NCPPB 4357 / Et1/99).